The chain runs to 199 residues: Prolactin-2 (199 aa).

Cystine bridges form between cysteine 4–cysteine 11, cysteine 58–cysteine 174, and cysteine 191–cysteine 199.

Belongs to the somatotropin/prolactin family.

The protein localises to the secreted. The polypeptide is Prolactin-2 (Alligator mississippiensis (American alligator)).